Consider the following 818-residue polypeptide: BDNF/NT-3 growth factors receptor (818 aa).

The N-terminal stretch at 1–31 is a signal peptide; the sequence is MVSWRRRPGPGLARLWGLCCLVLGCWRGALG. Intrachain disulfides connect Cys32/Cys38 and Cys36/Cys45. Residues 32–426 lie on the Extracellular side of the membrane; the sequence is CPASCRCSSW…DVSNKENEDS (395 aa). Asn66 carries N-linked (GlcNAc...) asparagine glycosylation. The LRR 1 repeat unit spans residues 71-92; sequence YIANQRKLESINDNEVGFYVGL. Residue Asn94 is glycosylated (N-linked (GlcNAc...) asparagine). Residues 95 to 116 form an LRR 2 repeat; that stretch reads LTVVDSGLRFVSRQAFVKNINL. N-linked (GlcNAc...) asparagine glycosylation occurs at Asn120. 2 disulfide bridges follow: Cys151–Cys175 and Cys153–Cys193. One can recognise an Ig-like C2-type 1 domain in the interval 196-281; it reads PSANLSNYNI…GEVQTSAELT (86 aa). 7 N-linked (GlcNAc...) asparagine glycosylation sites follow: Asn199, Asn204, Asn226, Asn253, Asn287, Asn324, and Asn337. A disulfide bond links Cys217 and Cys265. An Ig-like C2-type 2 domain is found at 295–364; that stretch reads TPDHHWCIPF…NGAYTLLAKN (70 aa). Cys301 and Cys344 are joined by a disulfide. Residues 384–394 are provides specificity for BDNF as ligand versus NTF3 and NTF4; that stretch reads GSGPIVDPDVY. Positions 400-418 are enriched in polar residues; the sequence is PNDLGDTTNNSNQITSPDV. Residues 400-420 form a disordered region; sequence PNDLGDTTNNSNQITSPDVSN. N-linked (GlcNAc...) asparagine glycosylation is present at Asn408. The helical transmembrane segment at 427 to 450 threads the bilayer; sequence ITVYVVVGIAALVCTGLVIMLIIL. At 451 to 818 the chain is on the cytoplasmic side; it reads KFGRHSKFGM…ASPVYLDILG (368 aa). A disordered region spans residues 469-494; it reads NDDDSASPLHHISNGSNTPSSSEGGP. The segment covering 481 to 491 has biased composition (polar residues); sequence SNGSNTPSSSE. The residue at position 512 (Tyr512) is a Phosphotyrosine; by autocatalysis. The Protein kinase domain occupies 534 to 803; the sequence is IVLKRELGEG…LNIKEIHSLL (270 aa). ATP is bound by residues 540 to 548 and Lys568; that span reads LGEGAFGKV. Asp672 (proton acceptor) is an active-site residue. A phosphotyrosine; by autocatalysis mark is found at Tyr698, Tyr702, Tyr703, and Tyr813.

The protein belongs to the protein kinase superfamily. Tyr protein kinase family. Insulin receptor subfamily. In terms of assembly, exists in a dynamic equilibrium between monomeric (low affinity) and dimeric (high affinity) structures. Interacts (phosphorylated upon activation by BDNF) with SHC1; mediates SHC1 phosphorylation and activation. Interacts (phosphorylated upon activation by BDNF) with PLCG1 and/or PLCG2; mediates PLCG1 phosphorylation and activation. Interacts with SH2B1 and SH2B2. Interacts with NGFR; may regulate the ligand specificity of the receptor. Interacts with SORCS2; this interaction is important for normal targeting to post-synaptic densities in response to high-frequency stimulation. Interacts (phosphorylated upon ligand-binding) with SH2D1A; regulates NTRK2. Interacts with SQSTM1 and KIDINS220. Interacts (phosphorylated upon ligand-binding) with FRS2; activates the MAPK signaling pathway. Interacts with APPL1. Interacts with MAPK8IP3/JIP3 and KLC1; interaction with KLC1 is mediated by MAPK8IP3/JIP3. Ligand-mediated auto-phosphorylation. In terms of tissue distribution, detected in embryonic brain and orsal root ganglia.

The protein localises to the cell membrane. Its subcellular location is the endosome membrane. It localises to the cell projection. The protein resides in the axon. It is found in the dendrite. The protein localises to the cytoplasm. Its subcellular location is the perinuclear region. It localises to the postsynaptic density. The enzyme catalyses L-tyrosyl-[protein] + ATP = O-phospho-L-tyrosyl-[protein] + ADP + H(+). With respect to regulation, the neuronal activity and the influx of calcium positively regulate the kinase activity and the internalization of the receptor which are both important for active signaling. Regulated by NGFR that may control the internalization of the receptor. NGFR may also stimulate the activation by BDNF compared to NTF3 and NTF4. The formation of active receptors dimers able to fully transduce the ligand-mediated signal, may be negatively regulated by the formation of inactive heterodimers with the non-catalytic isoforms. Its function is as follows. Receptor tyrosine kinase involved in the development and the maturation of the central and the peripheral nervous systems through regulation of neuron survival, proliferation, migration, differentiation, and synapse formation and plasticity. Receptor for BDNF/brain-derived neurotrophic factor and NTF4/neurotrophin-4. Alternatively can also bind NTF3/neurotrophin-3 which is less efficient in activating the receptor but regulates neuron survival through NTRK2. Upon ligand-binding, undergoes homodimerization, autophosphorylation and activation. Recruits, phosphorylates and/or activates several downstream effectors including SHC1, FRS2, SH2B1, SH2B2 and PLCG1 that regulate distinct overlapping signaling cascades. Through SHC1, FRS2, SH2B1, SH2B2 activates the GRB2-Ras-MAPK cascade that regulates for instance neuronal differentiation including neurite outgrowth. Through the same effectors controls the Ras-PI3 kinase-AKT1 signaling cascade that mainly regulates growth and survival. Through PLCG1 and the downstream protein kinase C-regulated pathways controls synaptic plasticity. Thereby, plays a role in learning and memory by regulating both short term synaptic function and long-term potentiation. PLCG1 also leads to NF-Kappa-B activation and the transcription of genes involved in cell survival. Hence, it is able to suppress anoikis, the apoptosis resulting from loss of cell-matrix interactions. May also play a role in neutrophin-dependent calcium signaling in glial cells and mediate communication between neurons and glia. This chain is BDNF/NT-3 growth factors receptor (NTRK2), found in Gallus gallus (Chicken).